A 109-amino-acid chain; its full sequence is A-type ATP synthase subunit F (109 aa).

This sequence belongs to the V-ATPase F subunit family. Has multiple subunits with at least A(3), B(3), C, D, E, F, H, I and proteolipid K(x).

The protein resides in the cell membrane. Functionally, component of the A-type ATP synthase that produces ATP from ADP in the presence of a proton gradient across the membrane. The polypeptide is A-type ATP synthase subunit F (Haloquadratum walsbyi (strain DSM 16790 / HBSQ001)).